The sequence spans 481 residues: UDP-glycosyltransferase 88F4 (481 aa).

UDP-alpha-D-glucose contacts are provided by residues S288, 357 to 358, 375 to 383, and 397 to 400; these read WA, HCGWNSVLE, and YAEQ.

Belongs to the UDP-glycosyltransferase family.

Its function is as follows. Glycosyltransferase that may possess chalcone and dihydrochalcone 2'-O-glucosyltransferase activity. The sequence is that of UDP-glycosyltransferase 88F4 from Malus domestica (Apple).